We begin with the raw amino-acid sequence, 2979 residues long: Polyketide synthase-nonribosomal peptide synthetase TwmB (2979 aa).

Residues 5–435 (GAEIAIIGSG…GTNAHAILES (431 aa)) form the Ketosynthase family 3 (KS3) domain. Catalysis depends on for beta-ketoacyl synthase activity residues Cys176, His315, and His355. The tract at residues 549 to 864 (VFTGQGAQWA…PYTGLFTRGV (316 aa)) is malonyl-CoA:ACP transacylase (MAT) domain. The active-site For malonyltransferase activity is the Ser643. An N-terminal hotdog fold region spans residues 936–1070 (HDLLGHLTPN…GRVRIHLGEA (135 aa)). The dehydratase (DH) domain stretch occupies residues 936–1234 (HDLLGHLTPN…ECVPFSRQTA (299 aa)). The 300-residue stretch at 936–1235 (HDLLGHLTPN…CVPFSRQTAK (300 aa)) folds into the PKS/mFAS DH domain. His968 functions as the Proton acceptor; for dehydratase activity in the catalytic mechanism. The tract at residues 1085–1235 (LVSVSEKKFY…CVPFSRQTAK (151 aa)) is C-terminal hotdog fold. The active-site Proton donor; for dehydratase activity is Asp1141. The interval 1387–1572 (NFTAHLAGIL…GIDTSTVEQP (186 aa)) is inactive methyltransferase (MT) domain. The tract at residues 2098 to 2271 (TYWLVGLTGG…AASVMDIGAV (174 aa)) is ketoreductase (KR)domain. Positions 2380–2465 (RNNEEAYGIV…ELVDTATEAI (86 aa)) constitute a Carrier domain. Ser2425 is subject to O-(pantetheine 4'-phosphoryl)serine. The disordered stretch occupies residues 2476 to 2497 (YPAEQTSSQNSDSGQDMASSFD). The segment covering 2479–2497 (EQTSSQNSDSGQDMASSFD) has biased composition (polar residues). The interval 2534–2970 (KSIPVSFTQA…MTLGQAALAE (437 aa)) is condensation.

As to quaternary structure, interacts with TwmE. Pantetheine 4'-phosphate serves as cofactor.

It carries out the reaction 5-aminopentanoate + 7 malonyl-CoA + acetyl-CoA + 11 NADPH + 17 H(+) = wortmanamide A + 7 CO2 + 11 NADP(+) + 8 CoA + 6 H2O. It catalyses the reaction 5-aminopentanoate + 8 malonyl-CoA + acetyl-CoA + 13 NADPH + 20 H(+) = wortmanamide B + 8 CO2 + 13 NADP(+) + 9 CoA + 7 H2O. It functions in the pathway secondary metabolite biosynthesis. Polyketide synthase-nonribosomal peptide synthetase; part of the gene cluster that mediates the biosynthesis of wortmanamides A and B, reduced long-chain polyketides amidated with a specific omega-amino acid, 5-aminopentanoic acid (5PA). The PKS modules of TwmB are involved in the synthesis of the polyketide backbone, whereas the non-canonical C domain of TwmB is a bonafide condensation domain that specifically selects 5PA and catalyzes amidation to release polyketide chain. The C domain clearly prefers C16 and C18 fatty acyl substrates, which is consistent with simultaneous formation of both octaketide and nonaketide acyl amides wortmanamides A and B. Because TwmB lacks a designated enoylreductase (ER) domain, the required activity is provided the enoyl reductase TwmE. The roles of the remaining enzymes have still to be clarified. The sequence is that of Polyketide synthase-nonribosomal peptide synthetase TwmB from Talaromyces wortmannii (Penicillium wortmannii).